We begin with the raw amino-acid sequence, 233 residues long: uncharacterized protein (233 aa).

Belongs to the asfivirus H233R family.

This is an uncharacterized protein from Ornithodoros (relapsing fever ticks).